We begin with the raw amino-acid sequence, 344 residues long: Serine proteinase inhibitor 2 (344 aa).

This sequence belongs to the serpin family. Poxviruses subfamily.

It localises to the host cytoplasm. Viral serpin that inhibits both cysteine and serine proteinases involved in the regulation of host inflammatory and apoptosis processes. Major anti-apoptotic protein which inhibits both intrinsic and extrinsic pathways and strongly cleaves host CASP1 and CASP8 but is a rather poor inhibitor of host CASP3. Prevents the proteolytic activity of host interleukin-1-beta converting enzyme (ICE) and ICE-like enzymes. Can also block apoptosis through host tumor necrosis factor (TNF) receptor. The inhibition of host ICE is an example of a 'cross-class' interaction, in which a serpin inhibits a non-serine proteinase. Also inhibits granzyme B. This chain is Serine proteinase inhibitor 2 (OPG199), found in Cynomys gunnisoni (Gunnison's prairie dog).